Here is a 490-residue protein sequence, read N- to C-terminus: 3-octaprenyl-4-hydroxybenzoate carboxy-lyase (490 aa).

Mn(2+) is bound at residue N172. Prenylated FMN is bound by residues 175–177 (IYR), 189–191 (RWL), and 194–195 (RG). E238 contacts Mn(2+). D287 acts as the Proton donor in catalysis.

It belongs to the UbiD family. Homohexamer. It depends on prenylated FMN as a cofactor. The cofactor is Mn(2+).

It localises to the cell membrane. The catalysed reaction is a 4-hydroxy-3-(all-trans-polyprenyl)benzoate + H(+) = a 2-(all-trans-polyprenyl)phenol + CO2. Its pathway is cofactor biosynthesis; ubiquinone biosynthesis. Functionally, catalyzes the decarboxylation of 3-octaprenyl-4-hydroxy benzoate to 2-octaprenylphenol, an intermediate step in ubiquinone biosynthesis. In Saccharophagus degradans (strain 2-40 / ATCC 43961 / DSM 17024), this protein is 3-octaprenyl-4-hydroxybenzoate carboxy-lyase.